Consider the following 425-residue polypeptide: tRNA(Met) cytidine acetate ligase (425 aa).

Residues 7–20, glycine 102, asparagine 165, and 190–191 each bind ATP; these read IVEY…HLYH and RI.

This sequence belongs to the TmcAL family.

It localises to the cytoplasm. It catalyses the reaction cytidine(34) in elongator tRNA(Met) + acetate + ATP = N(4)-acetylcytidine(34) in elongator tRNA(Met) + AMP + diphosphate. Catalyzes the formation of N(4)-acetylcytidine (ac(4)C) at the wobble position of elongator tRNA(Met), using acetate and ATP as substrates. First activates an acetate ion to form acetyladenylate (Ac-AMP) and then transfers the acetyl group to tRNA to form ac(4)C34. This Thermosipho melanesiensis (strain DSM 12029 / CIP 104789 / BI429) protein is tRNA(Met) cytidine acetate ligase.